Reading from the N-terminus, the 459-residue chain is uncharacterized protein (459 aa).

The 59-residue stretch at 9 to 67 folds into the TRAM domain; sequence KLEVGQTFPVTIKRLGINGEGVGYFKRQVVFIPGALPGEEVVAETTKIQRGFAEAKVKK. Cysteine 80, cysteine 86, cysteine 89, and cysteine 168 together coordinate [4Fe-4S] cluster. S-adenosyl-L-methionine is bound by residues glutamine 292, tyrosine 321, aspartate 342, and aspartate 390. Cysteine 417 serves as the catalytic Nucleophile.

The protein belongs to the class I-like SAM-binding methyltransferase superfamily. RNA M5U methyltransferase family.

This is an uncharacterized protein from Bacillus anthracis.